The chain runs to 92 residues: Acylphosphatase (92 aa).

The Acylphosphatase-like domain occupies 5–92 (YIVAYVYGVV…TPFETFSIRY (88 aa)). Active-site residues include Arg-20 and Asn-38.

This sequence belongs to the acylphosphatase family.

The enzyme catalyses an acyl phosphate + H2O = a carboxylate + phosphate + H(+). This Yersinia pseudotuberculosis serotype O:1b (strain IP 31758) protein is Acylphosphatase (acyP).